Reading from the N-terminus, the 379-residue chain is Mannitol-1-phosphate 5-dehydrogenase (379 aa).

3–14 (ALHFGAGNIGRG) lines the NAD(+) pocket.

The protein belongs to the mannitol dehydrogenase family.

The catalysed reaction is D-mannitol 1-phosphate + NAD(+) = beta-D-fructose 6-phosphate + NADH + H(+). The chain is Mannitol-1-phosphate 5-dehydrogenase from Actinobacillus pleuropneumoniae serotype 5b (strain L20).